We begin with the raw amino-acid sequence, 1722 residues long: Signal-induced proliferation-associated 1-like protein 2 (1722 aa).

The span at 1–12 (MSDPRQSQEEKH) shows a compositional bias: basic and acidic residues. Disordered stretches follow at residues 1–29 (MSDP…RIMQ) and 42–72 (NGNM…PAVP). A compositionally biased stretch (polar residues) spans 45–56 (MGPTTSLNASNS). S148 is modified (phosphoserine). The span at 360–377 (GASAASQTQMPTGQTGNC) shows a compositional bias: polar residues. The segment at 360–401 (GASAASQTQMPTGQTGNCESPLGSKEDLNSKENLDADEGDGK) is disordered. Residues S379 and S383 each carry the phosphoserine modification. A compositionally biased stretch (basic and acidic residues) spans 383 to 401 (SKEDLNSKENLDADEGDGK). In terms of domain architecture, Rap-GAP spans 595–812 (LLKLDEQGLS…RTRQEYLKDL (218 aa)). One can recognise a PDZ domain in the interval 950 to 1026 (EMTLRRNGLG…VKVVIIQPHD (77 aa)). At S1029 the chain carries Phosphoserine. Disordered stretches follow at residues 1067-1245 (HRVP…FGSG) and 1330-1360 (EGSM…SKSS). Low complexity-rich tracts occupy residues 1093–1102 (QQLLQQAQAA) and 1119–1130 (SSPSNQSSSSDP). Composition is skewed to basic and acidic residues over residues 1164–1183 (DGAR…ETKW) and 1194–1217 (YKER…HIGD). The segment covering 1219–1236 (SCSSHSSSNTLSSNTSSN) has biased composition (low complexity). S1244 bears the Phosphoserine mark. The segment covering 1337 to 1360 (SEISSHSSGSHHSGSPSAHCSKSS) has biased composition (low complexity). Phosphoserine is present on residues S1461, S1472, S1478, S1488, S1549, S1552, and S1591. Residues 1654 to 1712 (LTGKVNQLELILRQLQTDLRKEKQDKAVLQAEVQHLRQDNMRLQEESQTATAQLRKFTE) are a coiled coil.

In Homo sapiens (Human), this protein is Signal-induced proliferation-associated 1-like protein 2 (SIPA1L2).